Consider the following 317-residue polypeptide: MATH domain and coiled-coil domain-containing protein At3g58240 (317 aa).

The MATH domain maps to D6–I131. A coiled-coil region spans residues K254–N305.

The protein is MATH domain and coiled-coil domain-containing protein At3g58240 of Arabidopsis thaliana (Mouse-ear cress).